Here is a 225-residue protein sequence, read N- to C-terminus: Ribose-5-phosphate isomerase A (225 aa).

Substrate-binding positions include 32–35, 85–88, and 98–101; these read TGST, DGAD, and KGGG. Residue E107 is the Proton acceptor of the active site. Residue K125 coordinates substrate.

The protein belongs to the ribose 5-phosphate isomerase family. Homodimer.

It carries out the reaction aldehydo-D-ribose 5-phosphate = D-ribulose 5-phosphate. It functions in the pathway carbohydrate degradation; pentose phosphate pathway; D-ribose 5-phosphate from D-ribulose 5-phosphate (non-oxidative stage): step 1/1. Functionally, catalyzes the reversible conversion of ribose-5-phosphate to ribulose 5-phosphate. This Hahella chejuensis (strain KCTC 2396) protein is Ribose-5-phosphate isomerase A.